The chain runs to 475 residues: MKIPLNIGLIHFVGIGGIGMSGIAEVLHNLGYKIQGSDQANNTNIERLRSKGINVHIGHQAKNLGEAEVVVISTAIKKTNPEYIAAKEKHLPVVKRAEMLAELMRFRQAIAIGGTHGKTTTTSMVAALLDAGNFDPMVINGGIINAYGTNARMGNGNWMVVEADESDGTFLKLPADIVVVTNIDSEHLDHYGSFDAVRESFRQFVENVPFYGFAVMCLDHPEVQTLASRIDDRWVITYGANPQADVRFLNFSMKNKKAHFDVLIRSRKTGIQTELRDLVLPMSGKHNVSNATAAIAIAHELGISDEVIRKGLAEFGGVKRRFTQTGSWRGIDVFDDYGHHPVEIKAVLRAARESTNGQVIAIAQPHRYSRLCNLFDDFTTCFNDADTIMIAPVYAAGEEPITGFGSKELVEHIQMASHCDVRLIDDLEDVVSIVSTVAKSGDYVVFLGAGSITQWAYALPKRLAELDNNDEFSAN.

Residue 114–120 (GTHGKTT) coordinates ATP.

This sequence belongs to the MurCDEF family.

It is found in the cytoplasm. It catalyses the reaction UDP-N-acetyl-alpha-D-muramate + L-alanine + ATP = UDP-N-acetyl-alpha-D-muramoyl-L-alanine + ADP + phosphate + H(+). The protein operates within cell wall biogenesis; peptidoglycan biosynthesis. Its function is as follows. Cell wall formation. The polypeptide is UDP-N-acetylmuramate--L-alanine ligase (Bartonella bacilliformis (strain ATCC 35685 / KC583 / Herrer 020/F12,63)).